The following is a 119-amino-acid chain: Microtubule nucleation factor SSNA1 (119 aa).

Thr2 carries the N-acetylthreonine modification. Positions 2–32 (TQQGAALQNYNNELVKCIEELCQKREELCRQ) are important for localization to the centrosome. Positions 13 to 70 (NELVKCIEELCQKREELCRQIQQEEDEKQRLQNEVRQLTEKLARVNENLARKIASRNE) form a coiled coil.

This sequence belongs to the SSNA1 family. In terms of assembly, self-associates to form fibrils. Also forms dimers as well as monomers. Interacts with SPAST.

It localises to the nucleus. It is found in the cytoplasm. The protein resides in the cytoskeleton. Its subcellular location is the microtubule organizing center. The protein localises to the centrosome. It localises to the centriole. It is found in the midbody. The protein resides in the flagellum basal body. Its subcellular location is the flagellum axoneme. The protein localises to the cell projection. It localises to the axon. In terms of biological role, microtubule-binding protein which stabilizes dynamic microtubules by slowing growth and shrinkage at both plus and minus ends and serves as a sensor of microtubule damage, protecting microtubules from the microtubule-severing enzyme SPAST. Induces microtubule branching which is mediated by the formation of long SSNA1 fibrils which guide microtubule protofilaments to split apart from the mother microtubule and form daughter microtubules. Plays a role in axon outgrowth and branching. Required for cell division. The protein is Microtubule nucleation factor SSNA1 of Mus musculus (Mouse).